Reading from the N-terminus, the 320-residue chain is Methionyl-tRNA formyltransferase (320 aa).

Residue S111–P114 participates in (6S)-5,6,7,8-tetrahydrofolate binding.

It belongs to the Fmt family.

It carries out the reaction L-methionyl-tRNA(fMet) + (6R)-10-formyltetrahydrofolate = N-formyl-L-methionyl-tRNA(fMet) + (6S)-5,6,7,8-tetrahydrofolate + H(+). Functionally, attaches a formyl group to the free amino group of methionyl-tRNA(fMet). The formyl group appears to play a dual role in the initiator identity of N-formylmethionyl-tRNA by promoting its recognition by IF2 and preventing the misappropriation of this tRNA by the elongation apparatus. This Pediococcus pentosaceus (strain ATCC 25745 / CCUG 21536 / LMG 10740 / 183-1w) protein is Methionyl-tRNA formyltransferase.